The primary structure comprises 940 residues: Mitogen-activated protein kinase kinase kinase 10 (940 aa).

Residues 16 to 81 form the SH3 domain; the sequence is PAGPVWTAVF…PSNYVAPAAP (66 aa). Residues 98 to 360 form the Protein kinase domain; that stretch reads LQLEEIIGVG…GSILKQLEVI (263 aa). Residues 104 to 112 and lysine 125 each bind ATP; that span reads IGVGGFGKV. Aspartate 222 (proton acceptor) is an active-site residue. Residue threonine 258 is modified to Phosphothreonine; by autocatalysis. Serine 262 is subject to Phosphoserine; by autocatalysis and MAP4K1. 2 leucine-zipper regions span residues 384-405 and 419-440; these read IQHMFDDLRTKEKELRSREEEL and LRRREQELAEREMDIVERELHL. Disordered stretches follow at residues 490–599, 687–734, and 749–917; these read PTLD…MAPG, RAGD…GLAP, and STRS…QPTL. 3 positions are modified to phosphoserine: serine 498, serine 502, and serine 506. A compositionally biased stretch (low complexity) spans 501–511; the sequence is ASPPASPSIIP. Residue threonine 552 is modified to Phosphothreonine. 2 stretches are compositionally biased toward basic and acidic residues: residues 560-572 and 687-698; these read QKERAGGEERLKA and RAGDGEEQRRWL. A compositionally biased stretch (pro residues) spans 765 to 775; it reads APSPPPSPLAP. Positions 822-840 are enriched in basic and acidic residues; the sequence is LRQREPLELTNHGPRDPLD. Omega-N-methylarginine is present on arginine 843. Residues 899–913 show a composition bias toward pro residues; sequence PSRPDTPESPGPPSV.

This sequence belongs to the protein kinase superfamily. STE Ser/Thr protein kinase family. MAP kinase kinase kinase subfamily. Homodimer. Interacts with SH3RF2. Mg(2+) serves as cofactor. In terms of processing, autophosphorylation on serine and threonine residues within the activation loop plays a role in enzyme activation.

It carries out the reaction L-seryl-[protein] + ATP = O-phospho-L-seryl-[protein] + ADP + H(+). The catalysed reaction is L-threonyl-[protein] + ATP = O-phospho-L-threonyl-[protein] + ADP + H(+). Its activity is regulated as follows. Homodimerization via the leucine zipper domains is required for autophosphorylation and subsequent activation. In terms of biological role, activates the JUN N-terminal pathway. This is Mitogen-activated protein kinase kinase kinase 10 (Map3k10) from Mus musculus (Mouse).